A 343-amino-acid polypeptide reads, in one-letter code: Heat-inducible transcription repressor HrcA (343 aa).

This sequence belongs to the HrcA family.

In terms of biological role, negative regulator of class I heat shock genes (grpE-dnaK-dnaJ and groELS operons). Prevents heat-shock induction of these operons. The chain is Heat-inducible transcription repressor HrcA from Mycobacterium leprae (strain Br4923).